Consider the following 146-residue polypeptide: Prostaglandin E synthase 3 (146 aa).

The region spanning 1–76 is the CS domain; the sequence is VFIEFCVEDS…ESGQAWPRLT (76 aa). The segment at 110 to 146 is disordered; the sequence is SEMMNNMGGDDDVDLPEVDGADDDSPDSDDEKMPDLE. The segment covering 118–139 has biased composition (acidic residues); the sequence is GDDDVDLPEVDGADDDSPDSDD.

This sequence belongs to the p23/wos2 family. Binds to telomerase. Binds to the progesterone receptor.

It is found in the cytoplasm. The enzyme catalyses prostaglandin H2 = prostaglandin E2. Its pathway is lipid metabolism; prostaglandin biosynthesis. Molecular chaperone. This chain is Prostaglandin E synthase 3 (PTGES3), found in Gallus gallus (Chicken).